The primary structure comprises 739 residues: Phosphoribosylformylglycinamidine synthase subunit PurL (739 aa).

The active site involves histidine 53. Residues tyrosine 56 and lysine 95 each coordinate ATP. Residue glutamate 97 participates in Mg(2+) binding. Residues 98-101 (SHNH) and arginine 120 contribute to the substrate site. Catalysis depends on histidine 99, which acts as the Proton acceptor. Position 121 (aspartate 121) interacts with Mg(2+). Glutamine 244 is a substrate binding site. Aspartate 274 provides a ligand contact to Mg(2+). 318-320 (ESQ) is a binding site for substrate. ATP contacts are provided by aspartate 501 and glycine 538. Asparagine 539 contacts Mg(2+). Serine 541 serves as a coordination point for substrate.

The protein belongs to the FGAMS family. As to quaternary structure, monomer. Part of the FGAM synthase complex composed of 1 PurL, 1 PurQ and 2 PurS subunits.

It is found in the cytoplasm. It catalyses the reaction N(2)-formyl-N(1)-(5-phospho-beta-D-ribosyl)glycinamide + L-glutamine + ATP + H2O = 2-formamido-N(1)-(5-O-phospho-beta-D-ribosyl)acetamidine + L-glutamate + ADP + phosphate + H(+). Its pathway is purine metabolism; IMP biosynthesis via de novo pathway; 5-amino-1-(5-phospho-D-ribosyl)imidazole from N(2)-formyl-N(1)-(5-phospho-D-ribosyl)glycinamide: step 1/2. In terms of biological role, part of the phosphoribosylformylglycinamidine synthase complex involved in the purines biosynthetic pathway. Catalyzes the ATP-dependent conversion of formylglycinamide ribonucleotide (FGAR) and glutamine to yield formylglycinamidine ribonucleotide (FGAM) and glutamate. The FGAM synthase complex is composed of three subunits. PurQ produces an ammonia molecule by converting glutamine to glutamate. PurL transfers the ammonia molecule to FGAR to form FGAM in an ATP-dependent manner. PurS interacts with PurQ and PurL and is thought to assist in the transfer of the ammonia molecule from PurQ to PurL. In Listeria monocytogenes serotype 4a (strain HCC23), this protein is Phosphoribosylformylglycinamidine synthase subunit PurL.